The chain runs to 162 residues: Probable chemoreceptor glutamine deamidase CheD (162 aa).

This sequence belongs to the CheD family.

The enzyme catalyses L-glutaminyl-[protein] + H2O = L-glutamyl-[protein] + NH4(+). Its function is as follows. Probably deamidates glutamine residues to glutamate on methyl-accepting chemotaxis receptors (MCPs), playing an important role in chemotaxis. This is Probable chemoreceptor glutamine deamidase CheD from Pyrococcus horikoshii (strain ATCC 700860 / DSM 12428 / JCM 9974 / NBRC 100139 / OT-3).